The primary structure comprises 367 residues: GDSL esterase/lipase At4g28780 (367 aa).

Positions 1–28 (MSTFLLTWIIMTVALSVTLFLMPQQTNA) are cleaved as a signal peptide. Serine 38 functions as the Nucleophile in the catalytic mechanism. The N-linked (GlcNAc...) asparagine glycan is linked to asparagine 119. Residues aspartate 328 and histidine 331 contribute to the active site. An N-linked (GlcNAc...) asparagine glycan is attached at asparagine 356.

Belongs to the 'GDSL' lipolytic enzyme family.

It localises to the secreted. This chain is GDSL esterase/lipase At4g28780, found in Arabidopsis thaliana (Mouse-ear cress).